The primary structure comprises 438 residues: MRYSPHSPTEVEEMLFSIGMKNKAELFADIPDRLKLGRDLELGPGLTEMELNRHLKELAGKNMNLDDYPCFLGAGAYDHYIPAALDQLLLRSEFYTAYTPYQPEISQGILQAIFEYQTMICALTGMDVANASLYDGASALAEACQMACEGSRRRKVILPATLHPEYLEVVKSYAISGKMEIIMAPEQEGIIDKEATLALLDRDSACLVIQQPNFFGCIEEIAGWEKAVHANKSLLIMVVNPISLGLLKSPGEWGADIVVGEGQPLGNPLSFGGPYLGFMACSKKYMRKMPGRLVGQSVDSNEETCYVLTLQAREQHIRREQASSNICSNEALNALAASIYLSLVGRQGLVDIAARCHQLAIYARRQMENYGLSLKYPQAFFNEFAVELDDPARINRLLLEQGIIGGYELPGALLLAFTEKRSRAEIDRLAALIGGECR.

The protein belongs to the GcvP family. N-terminal subunit subfamily. As to quaternary structure, the glycine cleavage system is composed of four proteins: P, T, L and H. In this organism, the P 'protein' is a heterodimer of two subunits.

It carries out the reaction N(6)-[(R)-lipoyl]-L-lysyl-[glycine-cleavage complex H protein] + glycine + H(+) = N(6)-[(R)-S(8)-aminomethyldihydrolipoyl]-L-lysyl-[glycine-cleavage complex H protein] + CO2. Its function is as follows. The glycine cleavage system catalyzes the degradation of glycine. The P protein binds the alpha-amino group of glycine through its pyridoxal phosphate cofactor; CO(2) is released and the remaining methylamine moiety is then transferred to the lipoamide cofactor of the H protein. This Syntrophomonas wolfei subsp. wolfei (strain DSM 2245B / Goettingen) protein is Probable glycine dehydrogenase (decarboxylating) subunit 1.